We begin with the raw amino-acid sequence, 88 residues long: RQC P-site tRNA stabilizing factor (88 aa).

The 60-residue stretch at 1–60 folds into the S4 RNA-binding domain; the sequence is MRLDKYLKVSRIIKRRTVAKEVADKGRIKVNGILAKSSTDLKVNDQVEIRFGNKLLLVKV.

It belongs to the RqcP family. Associates with stalled 50S ribosomal subunits. Binds to RqcH, 23S rRNA and the P-site tRNA. Does not require RqcH for association with 50S subunits.

Key component of the ribosome quality control system (RQC), a ribosome-associated complex that mediates the extraction of incompletely synthesized nascent chains from stalled ribosomes and their subsequent degradation. RqcH recruits Ala-charged tRNA, and with RqcP directs the elongation of stalled nascent chains on 50S ribosomal subunits, leading to non-templated C-terminal alanine extensions (Ala tail). The Ala tail promotes nascent chain degradation. RqcP is associated with the translocation-like movement of the peptidyl-tRNA from the A-site into the P-site. The polypeptide is RQC P-site tRNA stabilizing factor (Streptococcus pneumoniae (strain ATCC BAA-255 / R6)).